Here is a 555-residue protein sequence, read N- to C-terminus: Developmental and secondary metabolism regulator veA (555 aa).

3 disordered regions span residues Met1 to Arg23, Glu39 to Pro60, and Arg234 to Ser533. The segment covering Glu13–Arg23 has biased composition (basic and acidic residues). The Velvet domain maps to Gly25 to Arg228. The Nuclear localization signal motif lies at Glu39–Cys44. A compositionally biased stretch (basic and acidic residues) spans Lys239–Asp258. Residues Ala311–Pro331 are compositionally biased toward pro residues. Polar residues-rich tracts occupy residues Arg336–Tyr372 and His380–Glu389. Residues Gln439–Gly479 are PEST. 2 stretches are compositionally biased toward basic and acidic residues: residues Arg492–Arg503 and Ala519–Ser533.

The protein belongs to the velvet family. VeA subfamily. Component of the heterotrimeric velvet complex composed of laeA, veA and velB; VeA acting as a bridging protein between laeA and velB.

It localises to the nucleus. Its subcellular location is the cytoplasm. In terms of biological role, component of the velvet transcription factor complex that controls sexual/asexual developmental ratio in response to light, promoting sexual development in the darkness while stimulating asexual sporulation under illumination. The velvet complex hat acts as a global regulator for secondary metabolite gene expression. Increases spore dispersing capacity by impacting conidiophore architecture. The polypeptide is Developmental and secondary metabolism regulator veA (Aspergillus niger (strain ATCC 1015 / CBS 113.46 / FGSC A1144 / LSHB Ac4 / NCTC 3858a / NRRL 328 / USDA 3528.7)).